A 177-amino-acid polypeptide reads, in one-letter code: ATP synthase subunit delta (177 aa).

Belongs to the ATPase delta chain family. In terms of assembly, F-type ATPases have 2 components, F(1) - the catalytic core - and F(0) - the membrane proton channel. F(1) has five subunits: alpha(3), beta(3), gamma(1), delta(1), epsilon(1). F(0) has three main subunits: a(1), b(2) and c(10-14). The alpha and beta chains form an alternating ring which encloses part of the gamma chain. F(1) is attached to F(0) by a central stalk formed by the gamma and epsilon chains, while a peripheral stalk is formed by the delta and b chains.

The protein localises to the cell inner membrane. In terms of biological role, f(1)F(0) ATP synthase produces ATP from ADP in the presence of a proton or sodium gradient. F-type ATPases consist of two structural domains, F(1) containing the extramembraneous catalytic core and F(0) containing the membrane proton channel, linked together by a central stalk and a peripheral stalk. During catalysis, ATP synthesis in the catalytic domain of F(1) is coupled via a rotary mechanism of the central stalk subunits to proton translocation. Its function is as follows. This protein is part of the stalk that links CF(0) to CF(1). It either transmits conformational changes from CF(0) to CF(1) or is implicated in proton conduction. This Aeromonas hydrophila subsp. hydrophila (strain ATCC 7966 / DSM 30187 / BCRC 13018 / CCUG 14551 / JCM 1027 / KCTC 2358 / NCIMB 9240 / NCTC 8049) protein is ATP synthase subunit delta.